The sequence spans 144 residues: MAADKPLRLLLGFDYGTRQIGVAVGQAVTGQARELCVLKAQNGVPDWNRVEALIKEWQPDAIVVGLPLNMDGSPSEMSERAEKFGRRLNGRFNLPVFTHDERLTTYAAKGERLAQGQRDGYRERPVDALAAALLLEGWLAEHPN.

Belongs to the YqgF nuclease family.

It is found in the cytoplasm. Could be a nuclease involved in processing of the 5'-end of pre-16S rRNA. This is Putative pre-16S rRNA nuclease from Pseudomonas paraeruginosa (strain DSM 24068 / PA7) (Pseudomonas aeruginosa (strain PA7)).